The primary structure comprises 615 residues: 3-(3-hydroxy-phenyl)propionate/3-hydroxycinnamic acid hydroxylase 1 (615 aa).

The disordered stretch occupies residues 1–20; sequence MRPAFEPAAGLGRAHPHETT. FAD-binding positions include 27-56 and 294-304; these read DVAI…VVEK and FRVKRILLAGD.

The protein belongs to the PheA/TfdB FAD monooxygenase family. FAD is required as a cofactor.

The catalysed reaction is 3-(3-hydroxyphenyl)propanoate + NADH + O2 + H(+) = 3-(2,3-dihydroxyphenyl)propanoate + NAD(+) + H2O. It carries out the reaction (2E)-3-(3-hydroxyphenyl)prop-2-enoate + NADH + O2 + H(+) = (2E)-3-(2,3-dihydroxyphenyl)prop-2-enoate + NAD(+) + H2O. It functions in the pathway aromatic compound metabolism; 3-phenylpropanoate degradation. Functionally, catalyzes the insertion of one atom of molecular oxygen into position 2 of the phenyl ring of 3-(3-hydroxyphenyl)propionate (3-HPP) and hydroxycinnamic acid (3HCI). This is 3-(3-hydroxy-phenyl)propionate/3-hydroxycinnamic acid hydroxylase 1 from Burkholderia vietnamiensis (strain G4 / LMG 22486) (Burkholderia cepacia (strain R1808)).